The following is a 580-amino-acid chain: Dihydroxy-acid dehydratase (580 aa).

Residue D95 participates in Mg(2+) binding. C136 serves as a coordination point for [2Fe-2S] cluster. The Mg(2+) site is built by D137 and K138. Residue K138 is modified to N6-carboxylysine. C209 serves as a coordination point for [2Fe-2S] cluster. Residue E462 participates in Mg(2+) binding. S488 serves as the catalytic Proton acceptor.

It belongs to the IlvD/Edd family. In terms of assembly, homodimer. It depends on [2Fe-2S] cluster as a cofactor. Mg(2+) serves as cofactor.

The enzyme catalyses (2R)-2,3-dihydroxy-3-methylbutanoate = 3-methyl-2-oxobutanoate + H2O. It carries out the reaction (2R,3R)-2,3-dihydroxy-3-methylpentanoate = (S)-3-methyl-2-oxopentanoate + H2O. It participates in amino-acid biosynthesis; L-isoleucine biosynthesis; L-isoleucine from 2-oxobutanoate: step 3/4. The protein operates within amino-acid biosynthesis; L-valine biosynthesis; L-valine from pyruvate: step 3/4. Functionally, functions in the biosynthesis of branched-chain amino acids. Catalyzes the dehydration of (2R,3R)-2,3-dihydroxy-3-methylpentanoate (2,3-dihydroxy-3-methylvalerate) into 2-oxo-3-methylpentanoate (2-oxo-3-methylvalerate) and of (2R)-2,3-dihydroxy-3-methylbutanoate (2,3-dihydroxyisovalerate) into 2-oxo-3-methylbutanoate (2-oxoisovalerate), the penultimate precursor to L-isoleucine and L-valine, respectively. The polypeptide is Dihydroxy-acid dehydratase (Leuconostoc mesenteroides subsp. mesenteroides (strain ATCC 8293 / DSM 20343 / BCRC 11652 / CCM 1803 / JCM 6124 / NCDO 523 / NBRC 100496 / NCIMB 8023 / NCTC 12954 / NRRL B-1118 / 37Y)).